A 1479-amino-acid polypeptide reads, in one-letter code: ABC transporter ecdL (1479 aa).

Helical transmembrane passes span 32–52, 82–102, and 142–162; these read LLFE…SVAL, LSNA…WLSF, and IASI…VEAM. N-linked (GlcNAc...) asparagine glycans are attached at residues N183 and N234. A run of 2 helical transmembrane segments spans residues 251-271 and 291-311; these read WGGF…PFLV and SGLI…TAAF. Residues 258–535 form the ABC transmembrane type-1 1 domain; sequence LCLIGVNYAQ…FVESLMGLRQ (278 aa). N345 is a glycosylation site (N-linked (GlcNAc...) asparagine). A run of 2 helical transmembrane segments spans residues 365–382 and 391–411; these read LHET…LWLL and VAAA…SGLL. Residue N427 is glycosylated (N-linked (GlcNAc...) asparagine). The next 2 membrane-spanning stretches (helical) occupy residues 469–489 and 503–523; these read LLVA…TFAF and PLLA…GQAV. An ABC transporter 1 domain is found at 607-835; sequence IVLQNHTASW…GSSLRLEELV (229 aa). N611 and N628 each carry an N-linked (GlcNAc...) asparagine glycan. Residue 641–648 coordinates ATP; that stretch reads GPIGSGKS. N-linked (GlcNAc...) asparagine glycans are attached at residues N793 and N797. A run of 5 helical transmembrane segments spans residues 885-905, 955-975, 1028-1048, 1052-1072, and 1135-1155; these read TIGW…VVAL, LFAV…LHLM, ALIG…VIVY, YLAA…MFYL, and IWLT…LVSI. The ABC transmembrane type-1 2 domain maps to 932–1193; sequence IWLKFWTEAN…LVYNWTALEN (262 aa). N1161 carries N-linked (GlcNAc...) asparagine glycosylation. The chain crosses the membrane as a helical span at residues 1165–1185; it reads ASIGLALVNLIAFGANMKGLV. A glycan (N-linked (GlcNAc...) asparagine) is linked at N1187. The 232-residue stretch at 1230-1461 folds into the ABC transporter 2 domain; it reads IKFKSVTASY…RSIFASLLRS (232 aa). 1264–1271 contributes to the ATP binding site; that stretch reads GRTGCGKS. A disordered region spans residues 1460 to 1479; that stretch reads RSGDEEPGNGHKHESEGEEE. Residues 1461 to 1479 show a composition bias toward basic and acidic residues; the sequence is SGDEEPGNGHKHESEGEEE.

Belongs to the ABC transporter superfamily. ABCC family. Conjugate transporter (TC 3.A.1.208) subfamily.

It localises to the cell membrane. Its function is as follows. ABC transporter; part of the gene cluster that mediates the biosynthesis of echinocandin B, a fungal lipidated cyclic hexapeptide that acts as an antifungal agent. This Aspergillus rugulosus (Emericella rugulosa) protein is ABC transporter ecdL.